The following is a 301-amino-acid chain: GTP cyclohydrolase FolE2 (301 aa).

It belongs to the GTP cyclohydrolase IV family.

The enzyme catalyses GTP + H2O = 7,8-dihydroneopterin 3'-triphosphate + formate + H(+). The protein operates within cofactor biosynthesis; 7,8-dihydroneopterin triphosphate biosynthesis; 7,8-dihydroneopterin triphosphate from GTP: step 1/1. In terms of biological role, converts GTP to 7,8-dihydroneopterin triphosphate. The chain is GTP cyclohydrolase FolE2 from Pseudomonas putida (strain GB-1).